The chain runs to 370 residues: MPFAPLQNDTFLRACWRQATDHTPVWLMRQAGRYLPEYVATRARAGSFMGLATNTDYATEVTLQPLERYPLDAAILFSDILTVPDAMGLGLSFEAGEGPRFARPVQGEAAVAALEVPDMAKLRYVFDAVASIRKALDGRVPLIGFSGSPWTLACYMVEGAGSSDYRLVKSMLYSRPDLMHRLLAVNADSVAAYLNAQIDAGAQAVMVFDSWGGVLADGAFQEFSLAYTARVLAGLQRNGADGQPVPRIVFTKGGGLWLEAMRELDCEVLGVDWTVNLSAARRLVGEGTDAKAKALQGNIDPNVLFAPPAQIEAEVAKVLQAFGQPHADAAAKGPTHIFNLGHGISQFTPPDHVAALVQAVHAQSRALRKG.

Substrate contacts are provided by residues 29–33, Asp-79, Tyr-155, Ser-210, and His-342; that span reads RQAGR.

It belongs to the uroporphyrinogen decarboxylase family. Homodimer.

It localises to the cytoplasm. It catalyses the reaction uroporphyrinogen III + 4 H(+) = coproporphyrinogen III + 4 CO2. It functions in the pathway porphyrin-containing compound metabolism; protoporphyrin-IX biosynthesis; coproporphyrinogen-III from 5-aminolevulinate: step 4/4. Functionally, catalyzes the decarboxylation of four acetate groups of uroporphyrinogen-III to yield coproporphyrinogen-III. This Variovorax paradoxus (strain S110) protein is Uroporphyrinogen decarboxylase.